A 211-amino-acid polypeptide reads, in one-letter code: ATP phosphoribosyltransferase (211 aa).

This sequence belongs to the ATP phosphoribosyltransferase family. Short subfamily. In terms of assembly, heteromultimer composed of HisG and HisZ subunits.

The protein resides in the cytoplasm. The catalysed reaction is 1-(5-phospho-beta-D-ribosyl)-ATP + diphosphate = 5-phospho-alpha-D-ribose 1-diphosphate + ATP. It functions in the pathway amino-acid biosynthesis; L-histidine biosynthesis; L-histidine from 5-phospho-alpha-D-ribose 1-diphosphate: step 1/9. In terms of biological role, catalyzes the condensation of ATP and 5-phosphoribose 1-diphosphate to form N'-(5'-phosphoribosyl)-ATP (PR-ATP). Has a crucial role in the pathway because the rate of histidine biosynthesis seems to be controlled primarily by regulation of HisG enzymatic activity. The protein is ATP phosphoribosyltransferase of Pseudomonas syringae pv. syringae (strain B728a).